Here is a 258-residue protein sequence, read N- to C-terminus: Synaptosomal-associated protein 29 (258 aa).

The segment at methionine 1 to glutamine 43 is disordered. Residues serine 65, serine 77, and serine 114 each carry the phosphoserine modification. A coiled-coil region spans residues valine 76–lysine 107. Disordered regions lie at residues proline 127 to lysine 147 and glutamine 161 to alanine 188. Threonine 130 and threonine 137 each carry phosphothreonine. Residues proline 131–proline 142 are compositionally biased toward polar residues. Serine 163, serine 182, serine 185, serine 204, and serine 210 each carry phosphoserine. In terms of domain architecture, t-SNARE coiled-coil homology spans arginine 196–leucine 258.

Belongs to the SNAP-25 family. Forms a SNARE complex, composed of VAMP8, SNAP29 and STX17, involved in fusion of autophagosome with lysosome. Interacts with multiple syntaxins including STX6. Interacts with EIPR1. Interacts with STX17; this interaction is increased in the absence of TMEM39A.

It localises to the cytoplasm. It is found in the golgi apparatus membrane. The protein resides in the cytoplasmic vesicle. Its subcellular location is the autophagosome membrane. The protein localises to the cell projection. It localises to the cilium membrane. SNAREs, soluble N-ethylmaleimide-sensitive factor-attachment protein receptors, are essential proteins for fusion of cellular membranes. SNAREs localized on opposing membranes assemble to form a trans-SNARE complex, an extended, parallel four alpha-helical bundle that drives membrane fusion. SNAP29 is a SNARE involved in autophagy through the direct control of autophagosome membrane fusion with the lysososome membrane. Also plays a role in ciliogenesis by regulating membrane fusions. The chain is Synaptosomal-associated protein 29 from Bos taurus (Bovine).